The sequence spans 290 residues: Shikimate dehydrogenase (NADP(+)) (290 aa).

Residues 22 to 24 (SLS) and threonine 68 each bind shikimate. Lysine 72 functions as the Proton acceptor in the catalytic mechanism. Aspartate 84 contributes to the NADP(+) binding site. Shikimate-binding residues include asparagine 93 and aspartate 108. NADP(+)-binding positions include 133–137 (GSGGS) and isoleucine 228. Residue tyrosine 230 coordinates shikimate. Glycine 251 contributes to the NADP(+) binding site.

It belongs to the shikimate dehydrogenase family. As to quaternary structure, homodimer.

It catalyses the reaction shikimate + NADP(+) = 3-dehydroshikimate + NADPH + H(+). The protein operates within metabolic intermediate biosynthesis; chorismate biosynthesis; chorismate from D-erythrose 4-phosphate and phosphoenolpyruvate: step 4/7. Functionally, involved in the biosynthesis of the chorismate, which leads to the biosynthesis of aromatic amino acids. Catalyzes the reversible NADPH linked reduction of 3-dehydroshikimate (DHSA) to yield shikimate (SA). In Leptospira interrogans serogroup Icterohaemorrhagiae serovar Lai (strain 56601), this protein is Shikimate dehydrogenase (NADP(+)).